A 148-amino-acid chain; its full sequence is Probable glucosamine 6-phosphate N-acetyltransferase (148 aa).

In terms of domain architecture, N-acetyltransferase spans 3 to 148; the sequence is ISINELNFDD…KQMALYLNGK (146 aa). Residues Thr-25, 72 to 75, and 84 to 86 each bind substrate; these read KFIH and EDV. Acetyl-CoA is bound by residues 86-88 and 94-99; these read VVV and LHGIGK. Residues 115-116 and Asp-120 contribute to the substrate site; that span reads YK. 129–131 contacts acetyl-CoA; the sequence is YCK. Glu-138 lines the substrate pocket.

Belongs to the acetyltransferase family. GNA1 subfamily.

The catalysed reaction is D-glucosamine 6-phosphate + acetyl-CoA = N-acetyl-D-glucosamine 6-phosphate + CoA + H(+). It participates in nucleotide-sugar biosynthesis; UDP-N-acetyl-alpha-D-glucosamine biosynthesis; N-acetyl-alpha-D-glucosamine 1-phosphate from alpha-D-glucosamine 6-phosphate (route I): step 1/2. The polypeptide is Probable glucosamine 6-phosphate N-acetyltransferase (Acanthamoeba polyphaga (Amoeba)).